A 251-amino-acid polypeptide reads, in one-letter code: UPF0309 protein GK1441 (251 aa).

The SIS domain occupies 31 to 214; it reads VSEAIQNGGI…VLMAENGIEP (184 aa).

Belongs to the UPF0309 family.

The protein is UPF0309 protein GK1441 of Geobacillus kaustophilus (strain HTA426).